We begin with the raw amino-acid sequence, 247 residues long: Triosephosphate isomerase (247 aa).

Substrate-binding residues include Asn10 and Lys12. The Electrophile role is filled by His95. Residue Glu165 is the Proton acceptor of the active site.

The protein belongs to the triosephosphate isomerase family. As to quaternary structure, homodimer.

The catalysed reaction is D-glyceraldehyde 3-phosphate = dihydroxyacetone phosphate. It functions in the pathway carbohydrate biosynthesis; gluconeogenesis. Its pathway is carbohydrate degradation; glycolysis; D-glyceraldehyde 3-phosphate from glycerone phosphate: step 1/1. This Yarrowia lipolytica (strain CLIB 122 / E 150) (Yeast) protein is Triosephosphate isomerase (TPI1).